A 682-amino-acid polypeptide reads, in one-letter code: Methionine--tRNA ligase (682 aa).

Residues 15–25 (PYANGAIHLGH) carry the 'HIGH' region motif. Residues Cys146, Cys149, Cys159, and Cys162 each coordinate Zn(2+). The short motif at 331–335 (KMSKS) is the 'KMSKS' region element. Residue Lys334 coordinates ATP. Residues 580-682 (DFAKLDMRVA…SGVTAGMQVK (103 aa)) enclose the tRNA-binding domain.

Belongs to the class-I aminoacyl-tRNA synthetase family. MetG type 1 subfamily. Homodimer. Zn(2+) serves as cofactor.

The protein localises to the cytoplasm. The enzyme catalyses tRNA(Met) + L-methionine + ATP = L-methionyl-tRNA(Met) + AMP + diphosphate. In terms of biological role, is required not only for elongation of protein synthesis but also for the initiation of all mRNA translation through initiator tRNA(fMet) aminoacylation. The sequence is that of Methionine--tRNA ligase from Haemophilus influenzae (strain ATCC 51907 / DSM 11121 / KW20 / Rd).